Here is a 321-residue protein sequence, read N- to C-terminus: G-protein coupled receptor aex-2 (321 aa).

At 1–24 (MNSTDIIANVTKPFVENLTLGETA) the chain is on the extracellular side. N-linked (GlcNAc...) asparagine glycosylation is found at Asn-2, Asn-9, and Asn-17. Residues 25–45 (FYISCGIVGTVFNALVLWIAL) traverse the membrane as a helical segment. The Cytoplasmic portion of the chain corresponds to 46–55 (TYINTEDKPR). A helical transmembrane segment spans residues 56-76 (QIIVINMTVADLLMCIVYMKT). Residues 77 to 90 (RPWLSHFNLWLCHP) lie on the Extracellular side of the membrane. Cys-88 and Cys-161 are oxidised to a cystine. Residues 91–111 (YYVIIWTCQMCSCLNLVWLNV) form a helical membrane-spanning segment. The Cytoplasmic segment spans residues 112–132 (DKLIYIQFPLHYYQIVNRKRL). A helical transmembrane segment spans residues 133–153 (LWITAATWGGLYAMNIALVTF). At 154–175 (LKITRGSCLGVSLNPYVYLLSP) the chain is on the extracellular side. Residues 176-196 (IFYVVMILTSFSLSALIYCIA) traverse the membrane as a helical segment. At 197–221 (HNLTHMEERQRSKLFRRLFFLFSST) the chain is on the cytoplasmic side. A helical membrane pass occupies residues 222 to 242 (LWTFFTCLPYRLLYLFSIFCG). The Extracellular segment spans residues 243-254 (ETCQINNYYKTA). A helical membrane pass occupies residues 255–275 (TNLFFRLLIVGIMINPVITIW). Topologically, residues 276–321 (TQRIYRLRLMRMFGRLRENSSTEVLMVSNRRASERPPEHTPLRCDM) are cytoplasmic.

This sequence belongs to the G-protein coupled receptor 1 family. As to expression, expressed in the intestinal muscle, anal depressor, AVL and DVB GABAergic neurons, enteric muscles, the nerve ring, the ventral nerve cord and head mesodermal cells.

It localises to the cell membrane. The protein localises to the cell projection. The protein resides in the cilium. Functionally, G-protein coupled receptor for the nlp-40 neuropeptide. The activity of this receptor is mediated by G proteins which activate adenylyl cyclase. Plays a role in the defecation motor program, which is a coordinated series of three muscle contractions that occurs every 45 seconds. Specifically, acts in GABAergic neurons, such as AVL and DVB, to control the expulsion step of defecation. Required for fatty acid uptake and metabolism by intestinal cells and therefore regulates the levels of triglycerides in the intestine. The chain is G-protein coupled receptor aex-2 from Caenorhabditis elegans.